A 334-amino-acid chain; its full sequence is Adenine deaminase (334 aa).

Positions 14, 16, and 194 each coordinate Zn(2+). Glutamate 197 serves as the catalytic Proton donor. Position 275 (aspartate 275) interacts with Zn(2+). Aspartate 276 serves as a coordination point for substrate.

It belongs to the metallo-dependent hydrolases superfamily. Adenosine and AMP deaminases family. Adenine deaminase type 2 subfamily. Zn(2+) serves as cofactor.

It carries out the reaction adenine + H2O + H(+) = hypoxanthine + NH4(+). Its function is as follows. Catalyzes the hydrolytic deamination of adenine to hypoxanthine. Plays an important role in the purine salvage pathway and in nitrogen catabolism. This chain is Adenine deaminase, found in Hahella chejuensis (strain KCTC 2396).